A 469-amino-acid chain; its full sequence is Calcium-binding mitochondrial carrier protein SCaMC-2-A (469 aa).

Residues 1–189 (MLCLCLYVPV…EHLTGMWWRH (189 aa)) lie on the Mitochondrial intermembrane side of the membrane. EF-hand domains lie at 47–80 (TYRR…QDHE), 78–113 (DHEK…LGVH), and 114–149 (ISLK…QPAE). Positions 64, 66, and 71 each coordinate Ca(2+). 3 Solcar repeats span residues 184 to 270 (GMWW…IKRV), 278 to 363 (LGIS…LKNT), and 375 to 463 (PGVF…IKST). The chain crosses the membrane as a helical span at residues 190-207 (LVSGGGAGAVSRTCTAPL). The Mitochondrial matrix portion of the chain corresponds to 208-244 (DRLKVLMQVHGCQGKSMCLMSGLTQMIKEGGVRSLWR). Residues 245–264 (GNGINVIKIAPETALKFMAY) form a helical membrane-spanning segment. At 265–287 (EQIKRVMGSSQETLGISERFVAG) the chain is on the mitochondrial intermembrane side. Residues 288 to 301 (SLAGVIAQSTIYPM) form a helical membrane-spanning segment. At 302 to 337 (EVLKTRLALRKTGQYKGISDCAKHILKTEGMSAFYK) the chain is on the mitochondrial matrix side. The helical transmembrane segment at 338–357 (GYVPNMLGIIPYAGIDLAVY) threads the bilayer. At 358 to 380 (ETLKNTWLQRYGTENADPGVFVL) the chain is on the mitochondrial intermembrane side. The chain crosses the membrane as a helical span at residues 381-398 (LACGTVSSTCGQLASYPL). Residues 399–437 (ALIRTRMQAQASVEGSSQVSMTGLFKQIMKTEGPTGLYR) are Mitochondrial matrix-facing. The chain crosses the membrane as a helical span at residues 438–457 (GLTPNFLKVIPAVSISYVVY). Residues 458–469 (EHIKSTLGVRSR) are Mitochondrial intermembrane-facing.

This sequence belongs to the mitochondrial carrier (TC 2.A.29) family.

Its subcellular location is the mitochondrion inner membrane. Calcium-dependent mitochondrial solute carrier. This is Calcium-binding mitochondrial carrier protein SCaMC-2-A (slc25a25a) from Danio rerio (Zebrafish).